A 429-amino-acid chain; its full sequence is Histidine--tRNA ligase (429 aa).

It belongs to the class-II aminoacyl-tRNA synthetase family. Homodimer.

The protein localises to the cytoplasm. The enzyme catalyses tRNA(His) + L-histidine + ATP = L-histidyl-tRNA(His) + AMP + diphosphate + H(+). This Pseudomonas putida (strain GB-1) protein is Histidine--tRNA ligase.